The following is a 263-amino-acid chain: Acyl-[acyl-carrier-protein]--UDP-N-acetylglucosamine O-acyltransferase (263 aa).

The protein belongs to the transferase hexapeptide repeat family. LpxA subfamily. In terms of assembly, homotrimer.

It localises to the cytoplasm. It catalyses the reaction a (3R)-hydroxyacyl-[ACP] + UDP-N-acetyl-alpha-D-glucosamine = a UDP-3-O-[(3R)-3-hydroxyacyl]-N-acetyl-alpha-D-glucosamine + holo-[ACP]. It participates in glycolipid biosynthesis; lipid IV(A) biosynthesis; lipid IV(A) from (3R)-3-hydroxytetradecanoyl-[acyl-carrier-protein] and UDP-N-acetyl-alpha-D-glucosamine: step 1/6. In terms of biological role, involved in the biosynthesis of lipid A, a phosphorylated glycolipid that anchors the lipopolysaccharide to the outer membrane of the cell. The chain is Acyl-[acyl-carrier-protein]--UDP-N-acetylglucosamine O-acyltransferase from Campylobacter jejuni subsp. doylei (strain ATCC BAA-1458 / RM4099 / 269.97).